We begin with the raw amino-acid sequence, 56 residues long: Large ribosomal subunit protein bL32 (56 aa).

The segment covering 1-20 has biased composition (basic residues); sequence MAVPKRRTSRSNTRSRRAQW. Residues 1–26 form a disordered region; that stretch reads MAVPKRRTSRSNTRSRRAQWKAKAPA.

Belongs to the bacterial ribosomal protein bL32 family.

The polypeptide is Large ribosomal subunit protein bL32 (Parafrankia sp. (strain EAN1pec)).